Here is a 182-residue protein sequence, read N- to C-terminus: Fatty-acid and retinol-binding protein 2 (182 aa).

The first 17 residues, 1–17 (MIRAFLVVALASVAVFS), serve as a signal peptide directing secretion. Coiled-coil stretches lie at residues 46-73 (LKAITAEEKAALKELAQNHKEYKTEEEF) and 131-152 (TLDSLKELAKGYIAEYKALSDD).

The protein belongs to the fatty-acid and retinol-binding protein (FARBP) family.

Its subcellular location is the secreted. Its function is as follows. Probably binds lipids. In Caenorhabditis elegans, this protein is Fatty-acid and retinol-binding protein 2 (far-2).